Consider the following 843-residue polypeptide: Protein P (843 aa).

The interval 1 to 177 is terminal protein domain (TP); it reads MPLSYQHFRK…FCGSPYSWEQ (177 aa). Positions 178–346 are spacer; it reads ELQHGRLVFQ…YCLTHIVNLL (169 aa). Disordered regions lie at residues 224-273 and 288-316; these read GLQP…SSTS and HLST…RSQS. Residues 288-299 are compositionally biased toward polar residues; sequence HLSTSKRQSSSG. The interval 347–690 is polymerase/reverse transcriptase domain (RT); sequence EDWGPCTEHG…YLNLYPVARQ (344 aa). In terms of domain architecture, Reverse transcriptase spans 357 to 600; the sequence is EHNIRIPRTP…YSLNFMGYVI (244 aa). Mg(2+)-binding residues include aspartate 429, aspartate 551, and aspartate 552.

It belongs to the hepadnaviridae P protein family.

It carries out the reaction DNA(n) + a 2'-deoxyribonucleoside 5'-triphosphate = DNA(n+1) + diphosphate. It catalyses the reaction Endonucleolytic cleavage to 5'-phosphomonoester.. With respect to regulation, activated by host HSP70 and HSP40 in vitro to be able to bind the epsilon loop of the pgRNA. Because deletion of the RNase H region renders the protein partly chaperone-independent, the chaperones may be needed indirectly to relieve occlusion of the RNA-binding site by this domain. Inhibited by several reverse-transcriptase inhibitors: Lamivudine, Adefovir and Entecavir. In terms of biological role, multifunctional enzyme that converts the viral RNA genome into dsDNA in viral cytoplasmic capsids. This enzyme displays a DNA polymerase activity that can copy either DNA or RNA templates, and a ribonuclease H (RNase H) activity that cleaves the RNA strand of RNA-DNA heteroduplexes in a partially processive 3'- to 5'-endonucleasic mode. Neo-synthesized pregenomic RNA (pgRNA) are encapsidated together with the P protein, and reverse-transcribed inside the nucleocapsid. Initiation of reverse-transcription occurs first by binding the epsilon loop on the pgRNA genome, and is initiated by protein priming, thereby the 5'-end of (-)DNA is covalently linked to P protein. Partial (+)DNA is synthesized from the (-)DNA template and generates the relaxed circular DNA (RC-DNA) genome. After budding and infection, the RC-DNA migrates in the nucleus, and is converted into a plasmid-like covalently closed circular DNA (cccDNA). The activity of P protein does not seem to be necessary for cccDNA generation, and is presumably released from (+)DNA by host nuclear DNA repair machinery. This Homo sapiens (Human) protein is Protein P.